Consider the following 382-residue polypeptide: Mannitol-1-phosphate 5-dehydrogenase (382 aa).

NAD(+) is bound at residue alanine 3–glycine 14.

Belongs to the mannitol dehydrogenase family.

The catalysed reaction is D-mannitol 1-phosphate + NAD(+) = beta-D-fructose 6-phosphate + NADH + H(+). This is Mannitol-1-phosphate 5-dehydrogenase from Salmonella dublin (strain CT_02021853).